Reading from the N-terminus, the 154-residue chain is Ubiquitin-conjugating enzyme E2 L3 (154 aa).

The UBC core domain maps to 2-149 (AASRRLMKEL…AEEFTKKYGE (148 aa)). Residue C86 is the Glycyl thioester intermediate of the active site. An N6-acetyllysine modification is found at K131.

This sequence belongs to the ubiquitin-conjugating enzyme family. Interacts with PRKN; involved in ubiquitination and degradation of misfolded proteins. Interacts with UBE3A. Interacts with CCNB1IP1, CBL, ZAP70, RNF19A, RNF19B and RNF144B. Interacts with ARIH1. Interacts with ARIH2 (via RING-type 1). Interacts with NCOA1; they functionally interact to regulate progesterone receptor transcriptional activity. Interacts with NDFIP1 (via N-terminus); the interaction mediates recruitment of UBE2L3 to ITCH and causes MAP3K7 ubiquitination. In terms of processing, ubiquitinated. The alteration of UBE2L3 protein levels during the S-phase of the cell cycle is due to ubiquitin-dependent proteasomal degradation. Autoubiquitinated in vitro.

It is found in the nucleus. The protein localises to the cytoplasm. The catalysed reaction is S-ubiquitinyl-[E1 ubiquitin-activating enzyme]-L-cysteine + [E2 ubiquitin-conjugating enzyme]-L-cysteine = [E1 ubiquitin-activating enzyme]-L-cysteine + S-ubiquitinyl-[E2 ubiquitin-conjugating enzyme]-L-cysteine.. Its pathway is protein modification; protein ubiquitination. Functionally, ubiquitin-conjugating enzyme E2 that specifically acts with HECT-type and RBR family E3 ubiquitin-protein ligases. Does not function with most RING-containing E3 ubiquitin-protein ligases because it lacks intrinsic E3-independent reactivity with lysine: in contrast, it has activity with the RBR family E3 enzymes, such as PRKN, RNF31 and ARIH1, that function like RING-HECT hybrids. Accepts ubiquitin from the E1 complex and catalyzes its covalent attachment to other proteins. Mediates ubiquitination by the CUL9-RBX1 complex. In vitro catalyzes 'Lys-11'-linked polyubiquitination. Involved in the selective degradation of short-lived and abnormal proteins. Down-regulated during the S-phase it is involved in progression through the cell cycle. Regulates nuclear hormone receptors transcriptional activity. May play a role in myelopoiesis. This chain is Ubiquitin-conjugating enzyme E2 L3 (UBE2L3), found in Pongo abelii (Sumatran orangutan).